The primary structure comprises 284 residues: 3-methyl-2-oxobutanoate hydroxymethyltransferase (284 aa).

Mg(2+)-binding residues include Asp-52 and Asp-91. Residues 52–53 (DS), Asp-91, and Lys-121 contribute to the 3-methyl-2-oxobutanoate site. Mg(2+) is bound at residue Glu-123. The active-site Proton acceptor is the Glu-191.

Belongs to the PanB family. As to quaternary structure, homodecamer; pentamer of dimers. It depends on Mg(2+) as a cofactor.

It is found in the cytoplasm. It catalyses the reaction 3-methyl-2-oxobutanoate + (6R)-5,10-methylene-5,6,7,8-tetrahydrofolate + H2O = 2-dehydropantoate + (6S)-5,6,7,8-tetrahydrofolate. It participates in cofactor biosynthesis; (R)-pantothenate biosynthesis; (R)-pantoate from 3-methyl-2-oxobutanoate: step 1/2. Its function is as follows. Catalyzes the reversible reaction in which hydroxymethyl group from 5,10-methylenetetrahydrofolate is transferred onto alpha-ketoisovalerate to form ketopantoate. In Deinococcus radiodurans (strain ATCC 13939 / DSM 20539 / JCM 16871 / CCUG 27074 / LMG 4051 / NBRC 15346 / NCIMB 9279 / VKM B-1422 / R1), this protein is 3-methyl-2-oxobutanoate hydroxymethyltransferase.